A 351-amino-acid chain; its full sequence is Transmembrane protein 185-like (351 aa).

The next 8 membrane-spanning stretches (helical) occupy residues 16–36 (LIYA…DGII), 41–61 (WAVF…ASVG), 81–101 (FKAM…EVLV), 113–133 (WLLV…ACVW), 154–174 (FIFI…VVCV), 178–198 (ILMS…VLFL), 212–232 (ITMA…EILL), and 244–264 (YVPV…TTFG).

Belongs to the TMEM185 family.

The protein localises to the membrane. In Danio rerio (Zebrafish), this protein is Transmembrane protein 185-like.